A 255-amino-acid chain; its full sequence is Tabinhibitin 2 (255 aa).

An N-terminal signal peptide occupies residues 1-23; sequence MISILVSRFLLAALVLQYATIDA. The Cell attachment site signature appears at 32-34; it reads RGD. An SCP domain is found at 67–211; it reads LSKINDVRDH…KARALLTCNF (145 aa).

It belongs to the CRISP family. Expressed in salivary glands.

It localises to the secreted. Its function is as follows. Inhibits platelet aggregation induced by all agonists tested (ADP, arachidonic acid, the thromboxane A2 analog U46619, thrombin, and snake venom snaclecs (TMVA that activates platelet through GPIB, and stejnulxin that specifically acts through GPVI (GP6))). May act by competing with fibrinogen for binding to glycoprotein IIb/IIIa (ITGA2B/ITGB3). This chain is Tabinhibitin 2, found in Tabanus yao (Horsefly).